An 86-amino-acid chain; its full sequence is Large ribosomal subunit protein uL23 (86 aa).

It belongs to the universal ribosomal protein uL23 family. As to quaternary structure, part of the 50S ribosomal subunit. Contacts protein L29.

Its function is as follows. Binds to 23S rRNA. One of the proteins that surrounds the polypeptide exit tunnel on the outside of the ribosome. This Thermococcus kodakarensis (strain ATCC BAA-918 / JCM 12380 / KOD1) (Pyrococcus kodakaraensis (strain KOD1)) protein is Large ribosomal subunit protein uL23.